Consider the following 513-residue polypeptide: Calcium-dependent protein kinase 24 (513 aa).

Positions 1 to 33 are disordered; the sequence is MQPDPSGSGGDGNANAKAKLAPPPVTAAGGRPV. Positions 47 to 305 constitute a Protein kinase domain; the sequence is YRIGKKLGQG…AHEVLCHPWI (259 aa). Residues 53-61 and lysine 76 contribute to the ATP site; that span reads LGQGQFGTT. Catalysis depends on aspartate 171, which acts as the Proton acceptor. The tract at residues 311–341 is autoinhibitory domain; that stretch reads APDKPIDSAVLSRLKHFSAMNKLKKMALRVI. EF-hand domains follow at residues 348 to 383, 384 to 419, 420 to 455, and 458 to 489; these read EEIGGLKELFKMIDTDDSGTITFDELKEGLKRVGSE, LTEHEIQALMEAADIDNSGTIDYGEFIAATLHMNKL, EREENLVSAFSFFDKDGSGFITIDELSQACREFGLD, and HLEDMIKDVDQNNDGQIDYSEFTAMMRKGNAG. Residues aspartate 361, aspartate 363, serine 365, threonine 367, glutamate 372, aspartate 397, aspartate 399, serine 401, threonine 403, glutamate 408, aspartate 433, aspartate 435, serine 437, glutamate 444, aspartate 467, asparagine 469, aspartate 471, glutamine 473, and glutamate 478 each contribute to the Ca(2+) site.

Belongs to the protein kinase superfamily. Ser/Thr protein kinase family. CDPK subfamily. In terms of tissue distribution, expressed in roots.

Its subcellular location is the cytoplasm. The catalysed reaction is L-seryl-[protein] + ATP = O-phospho-L-seryl-[protein] + ADP + H(+). The enzyme catalyses L-threonyl-[protein] + ATP = O-phospho-L-threonyl-[protein] + ADP + H(+). Its activity is regulated as follows. Activated by calcium. Autophosphorylation may play an important role in the regulation of the kinase activity. May play a role in signal transduction pathways that involve calcium as a second messenger. Possesses calcium-dependent protein kinase activity in vitro. The polypeptide is Calcium-dependent protein kinase 24 (Oryza sativa subsp. japonica (Rice)).